The chain runs to 514 residues: Beta-secretase 2 (514 aa).

Residues 1-19 form the signal peptide; it reads MGALLRALLLLVLAQWLLS. Positions 20–62 are excised as a propeptide; that stretch reads AVPALAPAPFTLPLQVAGATNHRASAVPGLGTPELPRADGLAL. Residues 20–469 are Extracellular-facing; it reads AVPALAPAPF…NEPILWIVSY (450 aa). One can recognise a Peptidase A1 domain in the interval 88–425; that stretch reads YYLEMLIGTP…DRAQRRVGFA (338 aa). Residue Asp-106 is part of the active site. Residue Asn-166 is glycosylated (N-linked (GlcNAc...) asparagine). 3 cysteine pairs are disulfide-bonded: Cys-229/Cys-429, Cys-288/Cys-453, and Cys-340/Cys-389. The active site involves Asp-299. N-linked (GlcNAc...) asparagine glycosylation occurs at Asn-362. Residues 470–490 form a helical membrane-spanning segment; that stretch reads ALMSVCGAILLVLILLLLLPL. The Cytoplasmic portion of the chain corresponds to 491 to 514; sequence HCRHAPRDPEVVNDESSLVRHRWK.

This sequence belongs to the peptidase A1 family. As to quaternary structure, monomer. Interacts with RTN3 and RTN4. Undergoes autoproteolytic cleavage. In terms of processing, glycosylated. High expression in pancreatic islets. Expressed at much lower levels in the pituitary, colon, and ovaries and is nearly absent from all the other tissues.

The protein localises to the cell membrane. The protein resides in the golgi apparatus. It localises to the endoplasmic reticulum. Its subcellular location is the endosome. It is found in the melanosome. The enzyme catalyses Broad endopeptidase specificity. Cleaves Glu-Val-Asn-Leu-|-Asp-Ala-Glu-Phe in the Swedish variant of Alzheimer's amyloid precursor protein.. Functionally, responsible for the proteolytic processing of the amyloid precursor protein (APP). Cleaves APP, between residues 690 and 691, leading to the generation and extracellular release of beta-cleaved soluble APP, and a corresponding cell-associated C-terminal fragment which is later released by gamma-secretase. It has also been shown that it can cleave APP between residues 671 and 672. Involved in the proteolytic shedding of PMEL at early stages of melanosome biogenesis. Cleaves PMEL within the M-beta fragment to release the amyloidogenic PMEL luminal fragment containing M-alpha and a small portion of M-beta N-terminus. This is a prerequisite step for subsequent processing and assembly of PMEL fibrils into amyloid sheets. Responsible also for the proteolytic processing of CLTRN in pancreatic beta cells. The polypeptide is Beta-secretase 2 (Bace2) (Mus musculus (Mouse)).